The following is a 440-amino-acid chain: C4-dicarboxylate transport protein (440 aa).

9 consecutive transmembrane segments (helical) span residues 7 to 29 (LYKS…GHYY), 49 to 66 (MVIA…IAGM), 79 to 101 (ALLY…VNVV), 143 to 165 (VVGA…FGFA), 186 to 208 (VMFN…AMAF), 221 to 243 (LGYL…LGGI), 291 to 313 (VVGL…YLTM), 328 to 350 (ITHQ…GVTG), and 355 to 377 (VLAA…ILGI). Residues 419–440 (GGAPLIDTRPTDDLGVAEGPAR) are disordered.

It belongs to the dicarboxylate/amino acid:cation symporter (DAACS) (TC 2.A.23) family.

The protein localises to the cell inner membrane. Functionally, responsible for the transport of dicarboxylates such as succinate, fumarate, and malate from the periplasm across the membrane. This Pseudomonas putida (strain ATCC 47054 / DSM 6125 / CFBP 8728 / NCIMB 11950 / KT2440) protein is C4-dicarboxylate transport protein.